Here is a 399-residue protein sequence, read N- to C-terminus: Lipid droplet-regulating VLDL assembly factor AUP1 (399 aa).

The Cytoplasmic segment spans residues methionine 1 to serine 21. Residues leucine 22 to isoleucine 42 lie within the membrane without spanning it. Topologically, residues glycine 43 to glycine 399 are cytoplasmic. The CUE domain occupies threonine 284 to valine 326. The tract at residues glutamate 332 to leucine 364 is disordered.

This sequence belongs to the AUP1 family.

It is found in the endoplasmic reticulum membrane. The protein localises to the lipid droplet. Its function is as follows. Plays a role in the translocation of terminally misfolded proteins from the endoplasmic reticulum lumen to the cytoplasm and their degradation by the proteasome. Plays a role in lipid droplet formation. Induces lipid droplet clustering. The sequence is that of Lipid droplet-regulating VLDL assembly factor AUP1 from Xenopus laevis (African clawed frog).